The sequence spans 488 residues: Bifunctional protein HldE (488 aa).

Residues 1–330 (MIDFDGLSNA…RNILPPASLA (330 aa)) form a ribokinase region. 205-208 (NSKE) lines the ATP pocket. Residue D275 is part of the active site. The interval 358–488 (FTNGCFDILH…TSLVKRAGGA (131 aa)) is cytidylyltransferase.

The protein in the N-terminal section; belongs to the carbohydrate kinase PfkB family. It in the C-terminal section; belongs to the cytidylyltransferase family. As to quaternary structure, homodimer.

The enzyme catalyses D-glycero-beta-D-manno-heptose 7-phosphate + ATP = D-glycero-beta-D-manno-heptose 1,7-bisphosphate + ADP + H(+). It carries out the reaction D-glycero-beta-D-manno-heptose 1-phosphate + ATP + H(+) = ADP-D-glycero-beta-D-manno-heptose + diphosphate. The protein operates within nucleotide-sugar biosynthesis; ADP-L-glycero-beta-D-manno-heptose biosynthesis; ADP-L-glycero-beta-D-manno-heptose from D-glycero-beta-D-manno-heptose 7-phosphate: step 1/4. It participates in nucleotide-sugar biosynthesis; ADP-L-glycero-beta-D-manno-heptose biosynthesis; ADP-L-glycero-beta-D-manno-heptose from D-glycero-beta-D-manno-heptose 7-phosphate: step 3/4. Catalyzes the phosphorylation of D-glycero-D-manno-heptose 7-phosphate at the C-1 position to selectively form D-glycero-beta-D-manno-heptose-1,7-bisphosphate. Its function is as follows. Catalyzes the ADP transfer from ATP to D-glycero-beta-D-manno-heptose 1-phosphate, yielding ADP-D-glycero-beta-D-manno-heptose. The chain is Bifunctional protein HldE from Nitrobacter winogradskyi (strain ATCC 25391 / DSM 10237 / CIP 104748 / NCIMB 11846 / Nb-255).